The primary structure comprises 360 residues: uncharacterized protein (360 aa).

Residue Lys-4–Leu-22 participates in NAD(+) binding.

Could be a NAD-dependent oxidoreductase. This is an uncharacterized protein from Sinorhizobium fredii (strain NBRC 101917 / NGR234).